The sequence spans 363 residues: MTLRVLAAMSGGVDSAVAAARAVEAGYDVTGVHLALSSNPQSYRTGARGCCTIEDSRDARRAADVIGIPFYIWDMAEEFDRDVVQDFVAEYAAGRTPNPCLRCNEKIKFQAVLERALALGFDAVCTGHHVRLENGRLRRSVDAVKDQSYVLAVLTREQLAHAIFPLGDCTKEEVRAEAARRGLTVADKPDSHDICFIADGDTSGFLERRLGSNPGPIVDETGQVVGEHRGAHAFTVGQRRGLNLSGAPHRRYVLSIEPVSNTVRVGPREALQVDRIVGERPVWSGCEPPEEWTPFLVQLRAHGEVYSCRARQYEGRVEILLDEPALGVAKGQAAVLYDGDVVMGSSTIAETSRVEQAAANHAE.

Residues 8–15 (AMSGGVDS) and Leu-34 each bind ATP. The Nucleophile role is filled by Cys-103. The cysteines at positions 103 and 195 are disulfide-linked. An ATP-binding site is contributed by Gly-127. An interaction with tRNA region spans residues 145 to 147 (KDQ). The active-site Cysteine persulfide intermediate is the Cys-195.

Belongs to the MnmA/TRMU family.

It is found in the cytoplasm. It catalyses the reaction S-sulfanyl-L-cysteinyl-[protein] + uridine(34) in tRNA + AH2 + ATP = 2-thiouridine(34) in tRNA + L-cysteinyl-[protein] + A + AMP + diphosphate + H(+). Functionally, catalyzes the 2-thiolation of uridine at the wobble position (U34) of tRNA, leading to the formation of s(2)U34. This chain is tRNA-specific 2-thiouridylase MnmA, found in Thermobifida fusca (strain YX).